The sequence spans 448 residues: Homogentisate 1,2-dioxygenase (448 aa).

Catalysis depends on His-303, which acts as the Proton acceptor. The Fe cation site is built by His-346 and Glu-352. 2 residues coordinate homogentisate: Tyr-361 and His-382. His-382 is a binding site for Fe cation.

The protein belongs to the homogentisate dioxygenase family. In terms of assembly, hexamer; dimer of trimers. Requires Fe cation as cofactor.

It carries out the reaction homogentisate + O2 = 4-maleylacetoacetate + H(+). The protein operates within amino-acid degradation; L-phenylalanine degradation; acetoacetate and fumarate from L-phenylalanine: step 4/6. In terms of biological role, involved in the catabolism of homogentisate (2,5-dihydroxyphenylacetate or 2,5-OH-PhAc), a central intermediate in the degradation of phenylalanine and tyrosine. Catalyzes the oxidative ring cleavage of the aromatic ring of homogentisate to yield maleylacetoacetate. This chain is Homogentisate 1,2-dioxygenase, found in Rhodopseudomonas palustris (strain BisB5).